Reading from the N-terminus, the 308-residue chain is MAVLPAQQHGLLVLNKPQGPTSAQCIARVKRLGQKKIGHAGTLDPMARGVLLVLLGHATKISGHLMADGEKVYLGTLRLGTTTDTWDAEGSVTATAPYDHVTPDDIRREVENWLGSTEQEVPPYSAAKHQGQPLYKLSRAGRETPVKTKTVEISRAQVVSCDLPSATFRVTCSSGTYIRSLAHSLGMRLGCGAMLTELTREYSHPFGIDEAHELDAVLAEPERLPERVIPVTRALPHWPKLRISAAQEAGVRNGMIVPYLPEAMAELPFAEGLKAIMLAPDDTPVALAETRIVNAQPVWTVLRGLWSQ.

The active-site Nucleophile is D44.

Belongs to the pseudouridine synthase TruB family. Type 1 subfamily.

It carries out the reaction uridine(55) in tRNA = pseudouridine(55) in tRNA. Functionally, responsible for synthesis of pseudouridine from uracil-55 in the psi GC loop of transfer RNAs. This is tRNA pseudouridine synthase B from Nitratidesulfovibrio vulgaris (strain DSM 19637 / Miyazaki F) (Desulfovibrio vulgaris).